A 409-amino-acid polypeptide reads, in one-letter code: Multidrug efflux pump Tap (409 aa).

12 helical membrane-spanning segments follow: residues Leu10–Phe30, Ile46–Val66, Leu80–Val98, Ala104–Ala123, Ser144–Leu168, Met174–Leu193, Phe218–Met240, Leu260–Ser282, Ala289–Leu308, Leu313–Val335, Val348–Leu370, and Gly375–Leu397.

This sequence belongs to the major facilitator superfamily. Drug:H(+) antiporter-3 (DHA3) (TC 2.A.1.21) family.

It localises to the cell inner membrane. With respect to regulation, efflux activity is inhibited by carbonyl cyanide m-chlorophenylhydrazone (CCCP) and reserpine, but not by o-vanadate or chlorpromazine (CPZ). Efflux pump that contributes to intrinsic antibiotic resistance. The pump uses the electrochemical gradient as a source of energy. Confers low-level resistance to tetracycline and to several aminoglycosides, including streptomycin, gentamicin, 2'-N-ethylnetilmicin and 6'-N-ethylnetilmicin. The chain is Multidrug efflux pump Tap from Mycolicibacterium fortuitum (Mycobacterium fortuitum).